The sequence spans 943 residues: Translation initiation factor IF-2 (943 aa).

Disordered stretches follow at residues 96 to 229 and 243 to 352; these read FIKR…ERRR and AAPK…QRQQ. Positions 104-116 are enriched in low complexity; it reads DAPSDAAESAPSA. Basic and acidic residues-rich tracts occupy residues 120 to 163 and 171 to 229; these read ELVR…EERA and AEKK…ERRR. Residues 278 to 293 show a composition bias toward low complexity; the sequence is ATGSGTGARAAAPSAP. Basic and acidic residues predominate over residues 313-323; the sequence is TTKKKEIKTRG. Residues 443–612 form the tr-type G domain; that stretch reads SRAPVVTVMG…LLQAEVLELK (170 aa). The tract at residues 452-459 is G1; that stretch reads GHVDHGKT. 452–459 provides a ligand contact to GTP; the sequence is GHVDHGKT. A G2 region spans residues 477–481; the sequence is GITQH. A G3 region spans residues 498 to 501; sequence DTPG. GTP-binding positions include 498–502 and 552–555; these read DTPGH and TKAD. The tract at residues 552 to 555 is G4; it reads TKAD. The interval 588–590 is G5; that stretch reads SSK.

This sequence belongs to the TRAFAC class translation factor GTPase superfamily. Classic translation factor GTPase family. IF-2 subfamily.

Its subcellular location is the cytoplasm. In terms of biological role, one of the essential components for the initiation of protein synthesis. Protects formylmethionyl-tRNA from spontaneous hydrolysis and promotes its binding to the 30S ribosomal subunits. Also involved in the hydrolysis of GTP during the formation of the 70S ribosomal complex. The chain is Translation initiation factor IF-2 from Acidovorax sp. (strain JS42).